Reading from the N-terminus, the 246-residue chain is Auxin-responsive protein IAA25 (246 aa).

The tract at residues 1 to 22 (MKSSSVAPRLKQERQDDCKFQE) is disordered. Residues 10–22 (LKQERQDDCKFQE) show a composition bias toward basic and acidic residues. An EAR-like (transcriptional repression) motif is present at residues 28-32 (LELRL). The PB1 domain maps to 143–238 (TMFVKVNLEG…SVKRLYIAQD (96 aa)).

Belongs to the Aux/IAA family. Homodimers and heterodimers. In terms of tissue distribution, highly expressed in flowers. Expressed in roots and seedlings.

Its subcellular location is the nucleus. Functionally, aux/IAA proteins are short-lived transcriptional factors that function as repressors of early auxin response genes at low auxin concentrations. The sequence is that of Auxin-responsive protein IAA25 (IAA25) from Oryza sativa subsp. japonica (Rice).